Here is a 250-residue protein sequence, read N- to C-terminus: Probable transcriptional regulatory protein Ctha_1786 (250 aa).

It belongs to the TACO1 family.

It is found in the cytoplasm. The chain is Probable transcriptional regulatory protein Ctha_1786 from Chloroherpeton thalassium (strain ATCC 35110 / GB-78).